We begin with the raw amino-acid sequence, 365 residues long: MTWSYPVDPYWMVALKALLVVVGLLTAFAFMTLIERRLLARFQVRMGPNRVGPFGLLQPLADAIKSIFKEDIVVAQADRFLFVLAPLISVVFALLAFGLIPFGPPGSFFGYQPWVINLDLGILYLFAVSELAVYGIFLSGWASGSKYSLLGSLRSSASLISYELGLGLALLAPVLLVGSLNLNDIVNWQKEHGWLFLYAFPAFLVYLIASMAEAARTPFDLPEAEQELVGGYHTEYSSIKWALFQMAEYIHFITASALIPTLFLGGWTMPVLEVPYLWMFLKIAFFLFFFIWIRATWFRLRYDQLLRFGWGFLFPLALLWFLVTALVVALDLPRTYLLYLSALSFLVLLGAVLYTPKPARKGGGA.

9 helical membrane-spanning segments follow: residues 11-31, 80-100, 120-140, 157-177, 192-212, 252-272, 273-293, 310-330, and 336-356; these read WMVA…FAFM, FLFV…FGLI, LGIL…FLSG, ASLI…VLLV, HGWL…ASMA, FITA…MPVL, EVPY…FIWI, WGFL…VVAL, and YLLY…LYTP.

It belongs to the complex I subunit 1 family. NDH-1 is composed of 15 different subunits, Nqo1 to Nqo15. The complex has a L-shaped structure, with the hydrophobic arm (subunits Nqo7, Nqo8 and Nqo10 to Nqo14) embedded in the membrane and the hydrophilic peripheral arm (subunits Nqo1 to Nqo6, Nqo9 and Nqo15) protruding into the bacterial cytoplasm. The hydrophilic domain contains all the redox centers.

It is found in the cell inner membrane. The enzyme catalyses a quinone + NADH + 5 H(+)(in) = a quinol + NAD(+) + 4 H(+)(out). In terms of biological role, NDH-1 shuttles electrons from NADH, via FMN and iron-sulfur (Fe-S) centers, to quinones in the respiratory chain. The immediate electron acceptor for the enzyme in this species is menaquinone. Couples the redox reaction to proton translocation (for every two electrons transferred, four hydrogen ions are translocated across the cytoplasmic membrane), and thus conserves the redox energy in a proton gradient required for the synthesis of ATP. The chain is NADH-quinone oxidoreductase subunit 8 (nqo8) from Thermus thermophilus (strain ATCC 27634 / DSM 579 / HB8).